Reading from the N-terminus, the 119-residue chain is Fluoride-specific ion channel FluC 1 (119 aa).

4 helical membrane passes run 2–22 (TGAVAPPAVLVAAGGALGAVL), 37–57 (AGTLVVNVVGSFVLAALTFAA), 62–82 (TMLLFGTGACGAFTTFASFSV), and 99–119 (HALGNLLGAGLAVALAWLLVA). Gly-72 and Thr-75 together coordinate Na(+).

The protein belongs to the fluoride channel Fluc/FEX (TC 1.A.43) family.

The protein localises to the cell membrane. The catalysed reaction is fluoride(in) = fluoride(out). Na(+) is not transported, but it plays an essential structural role and its presence is essential for fluoride channel function. Functionally, fluoride-specific ion channel. Important for reducing fluoride concentration in the cell, thus reducing its toxicity. This Halobacterium salinarum (strain ATCC 700922 / JCM 11081 / NRC-1) (Halobacterium halobium) protein is Fluoride-specific ion channel FluC 1.